The primary structure comprises 383 residues: Arginine biosynthesis bifunctional protein ArgJ (383 aa).

Positions 146, 168, 179, 259, 378, and 383 each coordinate substrate. The Nucleophile role is filled by Thr179.

The protein belongs to the ArgJ family. As to quaternary structure, heterotetramer of two alpha and two beta chains.

The protein localises to the cytoplasm. It catalyses the reaction N(2)-acetyl-L-ornithine + L-glutamate = N-acetyl-L-glutamate + L-ornithine. It carries out the reaction L-glutamate + acetyl-CoA = N-acetyl-L-glutamate + CoA + H(+). It functions in the pathway amino-acid biosynthesis; L-arginine biosynthesis; L-ornithine and N-acetyl-L-glutamate from L-glutamate and N(2)-acetyl-L-ornithine (cyclic): step 1/1. Its pathway is amino-acid biosynthesis; L-arginine biosynthesis; N(2)-acetyl-L-ornithine from L-glutamate: step 1/4. In terms of biological role, catalyzes two activities which are involved in the cyclic version of arginine biosynthesis: the synthesis of N-acetylglutamate from glutamate and acetyl-CoA as the acetyl donor, and of ornithine by transacetylation between N(2)-acetylornithine and glutamate. This chain is Arginine biosynthesis bifunctional protein ArgJ, found in Streptomyces coelicolor (strain ATCC BAA-471 / A3(2) / M145).